An 89-amino-acid chain; its full sequence is Small ribosomal subunit protein uS15 (89 aa).

It belongs to the universal ribosomal protein uS15 family. As to quaternary structure, part of the 30S ribosomal subunit. Forms a bridge to the 50S subunit in the 70S ribosome, contacting the 23S rRNA.

Functionally, one of the primary rRNA binding proteins, it binds directly to 16S rRNA where it helps nucleate assembly of the platform of the 30S subunit by binding and bridging several RNA helices of the 16S rRNA. In terms of biological role, forms an intersubunit bridge (bridge B4) with the 23S rRNA of the 50S subunit in the ribosome. The polypeptide is Small ribosomal subunit protein uS15 (Acholeplasma laidlawii (strain PG-8A)).